Consider the following 93-residue polypeptide: Large ribosomal subunit protein uL23cy (93 aa).

Belongs to the universal ribosomal protein uL23 family. As to quaternary structure, part of the 50S ribosomal subunit.

The protein localises to the plastid. Its subcellular location is the chloroplast. Functionally, binds to 23S rRNA. This Agrostis stolonifera (Creeping bentgrass) protein is Large ribosomal subunit protein uL23cy (rpl23-B).